The primary structure comprises 444 residues: L-seryl-tRNA(Sec) selenium transferase (444 aa).

An N6-(pyridoxal phosphate)lysine modification is found at K284.

This sequence belongs to the SelA family. Requires pyridoxal 5'-phosphate as cofactor.

It is found in the cytoplasm. The enzyme catalyses L-seryl-tRNA(Sec) + selenophosphate + H(+) = L-selenocysteinyl-tRNA(Sec) + phosphate. It participates in aminoacyl-tRNA biosynthesis; selenocysteinyl-tRNA(Sec) biosynthesis; selenocysteinyl-tRNA(Sec) from L-seryl-tRNA(Sec) (bacterial route): step 1/1. Converts seryl-tRNA(Sec) to selenocysteinyl-tRNA(Sec) required for selenoprotein biosynthesis. In Wolinella succinogenes (strain ATCC 29543 / DSM 1740 / CCUG 13145 / JCM 31913 / LMG 7466 / NCTC 11488 / FDC 602W) (Vibrio succinogenes), this protein is L-seryl-tRNA(Sec) selenium transferase.